The chain runs to 309 residues: Anamorsin (309 aa).

The interval Ile6–Ser172 is N-terminal SAM-like domain. A linker region spans residues Gln173–Leu222. Ser182, Ser183, and Ser213 each carry phosphoserine. 4 residues coordinate [2Fe-2S] cluster: Cys235, Cys244, Cys247, and Cys249. Residues Cys235 to Cys249 form a fe-S binding site A region. Ser269 carries the post-translational modification Phosphoserine. Cys271, Cys274, Cys282, and Cys285 together coordinate [4Fe-4S] cluster. Short sequence motifs (cx2C motif) lie at residues Cys271–Cys274 and Cys282–Cys285. Residues Cys271 to Cys285 are fe-S binding site B. Residues Ser302 and Ser304 each carry the phosphoserine modification.

The protein belongs to the anamorsin family. Monomer. Interacts with NDOR1. Interacts with CHCHD4. The cofactor is [2Fe-2S] cluster. [4Fe-4S] cluster is required as a cofactor.

The protein localises to the cytoplasm. The protein resides in the nucleus. Its subcellular location is the mitochondrion intermembrane space. Its function is as follows. Component of the cytosolic iron-sulfur (Fe-S) protein assembly (CIA) machinery required for the maturation of extramitochondrial Fe-S proteins. Part of an electron transfer chain functioning in an early step of cytosolic Fe-S biogenesis, facilitating the de novo assembly of a [4Fe-4S] cluster on the scaffold complex NUBP1-NUBP2. Electrons are transferred to CIAPIN1 from NADPH via the FAD- and FMN-containing protein NDOR1. NDOR1-CIAPIN1 are also required for the assembly of the diferric tyrosyl radical cofactor of ribonucleotide reductase (RNR), probably by providing electrons for reduction during radical cofactor maturation in the catalytic small subunit. Has anti-apoptotic effects in the cell. Involved in negative control of cell death upon cytokine withdrawal. Promotes development of hematopoietic cells. This Rattus norvegicus (Rat) protein is Anamorsin.